The sequence spans 338 residues: Inositol 2-dehydrogenase 4 (338 aa).

The protein belongs to the Gfo/Idh/MocA family. Homotetramer.

It carries out the reaction myo-inositol + NAD(+) = scyllo-inosose + NADH + H(+). Involved in the oxidation of myo-inositol (MI) to 2-keto-myo-inositol (2KMI or 2-inosose). The chain is Inositol 2-dehydrogenase 4 from Saccharopolyspora erythraea (strain ATCC 11635 / DSM 40517 / JCM 4748 / NBRC 13426 / NCIMB 8594 / NRRL 2338).